The chain runs to 142 residues: Phosphoribosyl-AMP cyclohydrolase (142 aa).

Position 92 (D92) interacts with Mg(2+). C93 provides a ligand contact to Zn(2+). Mg(2+) is bound by residues D94 and D96. Positions 109 and 116 each coordinate Zn(2+).

Belongs to the PRA-CH family. As to quaternary structure, homodimer. The cofactor is Mg(2+). Zn(2+) serves as cofactor.

Its subcellular location is the cytoplasm. It catalyses the reaction 1-(5-phospho-beta-D-ribosyl)-5'-AMP + H2O = 1-(5-phospho-beta-D-ribosyl)-5-[(5-phospho-beta-D-ribosylamino)methylideneamino]imidazole-4-carboxamide. It participates in amino-acid biosynthesis; L-histidine biosynthesis; L-histidine from 5-phospho-alpha-D-ribose 1-diphosphate: step 3/9. In terms of biological role, catalyzes the hydrolysis of the adenine ring of phosphoribosyl-AMP. The sequence is that of Phosphoribosyl-AMP cyclohydrolase from Alkalilimnicola ehrlichii (strain ATCC BAA-1101 / DSM 17681 / MLHE-1).